The primary structure comprises 65 residues: Protein MalX (65 aa).

This is Protein MalX (malX) from Klebsiella pneumoniae.